Here is a 422-residue protein sequence, read N- to C-terminus: Testin (422 aa).

The region spanning 92 to 199 (MILTSPVAAK…GDVKLPKEVE (108 aa)) is the PET domain. The interval 135–165 (QPVAGSEGAQYRKKQLAKQLPAHDQDPSKCH) is disordered. The span at 155–165 (PAHDQDPSKCH) shows a compositional bias: basic and acidic residues. LIM zinc-binding domains follow at residues 234–299 (YYCF…SEKP), 300–359 (RCAG…NHAV), and 360–422 (SCQG…KMSS).

Belongs to the prickle / espinas / testin family. In terms of tissue distribution, expressed in the animal hemisphere at the 4-cell stage. By stage 18, expressed in cells adjacent to the anterior neural plate. In late neurula, expressed in the cranial neural crest. At tail bud stages, expressed strongly in the head, ventral to the developing eye, branchial arches and lateral line placodes. Also localized in the otic vesicle, dorsal fin and notochord with weaker expression at intersomitic junctions of tail bud embryos.

It is found in the cytoplasm. It localises to the cell cortex. The protein localises to the cell junction. The protein resides in the focal adhesion. Its function is as follows. Scaffold protein that may play a role in cell adhesion, cell spreading and in the reorganization of the actin cytoskeleton. May inhibit cell growth. Regulates cranial neural crest migration. Acts together with prickle1 to control axial elongation. The polypeptide is Testin (Xenopus laevis (African clawed frog)).